We begin with the raw amino-acid sequence, 685 residues long: Sodium-dependent phosphate transporter 1-A (685 aa).

Transmembrane regions (helical) follow at residues 21–41 (IMAP…VLAF), 66–86 (ACIL…AKVS), 106–126 (LMAG…AASF), 162–182 (IVLS…LLFL), 207–227 (ACTI…LLGF), and 234–254 (GIIL…WFVV). 2 disordered regions span residues 438–458 (RNRD…HGAD) and 483–513 (EAEE…HDQD). The span at 483 to 496 (EAEEQEEGSVEDVE) shows a compositional bias: acidic residues. Residues 497 to 513 (TDRKSSSSSLEERHDQD) are compositionally biased toward basic and acidic residues. Transmembrane regions (helical) follow at residues 517–537 (VSLL…FAHG), 565–585 (ATPI…LWVW), 606–626 (FSIE…GLPI), and 656–676 (IFLA…GIMA).

The protein belongs to the inorganic phosphate transporter (PiT) (TC 2.A.20) family.

The protein localises to the membrane. Functionally, sodium-phosphate symporter which plays a fundamental housekeeping role in phosphate transport. The sequence is that of Sodium-dependent phosphate transporter 1-A (slc20a1-a) from Xenopus laevis (African clawed frog).